A 460-amino-acid polypeptide reads, in one-letter code: Armadillo repeat-containing protein LFR (460 aa).

The disordered stretch occupies residues 1–30; that stretch reads MQKRELGKSGGNSGGSSGPPAKRGRPFGST. Residues 8 to 17 are compositionally biased toward gly residues; it reads KSGGNSGGSS. ARM repeat units follow at residues 227 to 269, 323 to 362, and 366 to 407; these read DNEV…NLAH, NEPF…NLVE, and DCRL…NLVS.

In terms of assembly, interacts with AS2. As to expression, expressed in roots, leaves, stems and flowers.

It is found in the nucleus. Its function is as follows. Involved in leaf and flower development. Plays roles in leaf development partly by associating with AS2 and repressing KNAT1/BP transcription. Required for the formation of anther cell layers and normal expression of genes that regulates anther development. This chain is Armadillo repeat-containing protein LFR, found in Arabidopsis thaliana (Mouse-ear cress).